We begin with the raw amino-acid sequence, 415 residues long: Multidrug resistance protein MdtA (415 aa).

A signal peptide spans 1–21; that stretch reads MKGSYKSRWVIVIVVVIAAIA. Disordered stretches follow at residues 32–56 and 392–415; these read SRSA…GMRA and EAQS…GARS. The span at 399 to 415 shows a compositional bias: basic and acidic residues; that stretch reads SEEKATSREYAKKGARS.

This sequence belongs to the membrane fusion protein (MFP) (TC 8.A.1) family. Part of a tripartite efflux system composed of MdtA, MdtB and MdtC.

The protein resides in the cell inner membrane. Functionally, the MdtABC tripartite complex confers resistance against novobiocin and deoxycholate. The polypeptide is Multidrug resistance protein MdtA (Escherichia coli O7:K1 (strain IAI39 / ExPEC)).